Reading from the N-terminus, the 212-residue chain is Ras-related protein Rab-2A (212 aa).

The residue at position 2 (Ala-2) is an N-acetylalanine. Residues 2–19 (AYAYLFKYIIIGDTGVGK) form a required for interaction with PRKCI region. The GTP site is built by Gly-16, Val-17, Gly-18, Lys-19, Ser-20, Cys-21, and Thr-38. Ser-20 lines the Mg(2+) pocket. The Switch 1 signature appears at 37-42 (LTMGVE). Residues Thr-38 and Asp-61 each coordinate Mg(2+). Positions 63-72 (AGQESFRSIT) match the Switch 2 motif. Gly-64, Asn-119, Lys-120, Asp-122, Ala-150, and Lys-151 together coordinate GTP. Residues 190–212 (QHAATNASHGGNQGGQQAGGGCC) form a disordered region. The span at 200–212 (GNQGGQQAGGGCC) shows a compositional bias: gly residues. 2 S-geranylgeranyl cysteine lipidation sites follow: Cys-211 and Cys-212.

The protein belongs to the small GTPase superfamily. Rab family. In terms of assembly, interacts with PRKCI. Interacts with TRIP11. Interacts (in GTP-bound form) with GARIN1B. Interacts (GTP-bound) with HOPS complex component VPS39; interaction contributes to obtaining a functional HOPS complex that promotes autophagosome-lysosome membrane fusion driven by STX17-SNAP29-VAMP8. May interact with VPS41. Mg(2+) serves as cofactor. Post-translationally, prenylated. Prenylation is required for association with cellular membranes.

The protein localises to the endoplasmic reticulum-Golgi intermediate compartment membrane. Its subcellular location is the melanosome. It is found in the endoplasmic reticulum membrane. The protein resides in the golgi apparatus membrane. It localises to the cytoplasmic vesicle. The protein localises to the secretory vesicle. Its subcellular location is the acrosome. It is found in the autophagosome membrane. The catalysed reaction is GTP + H2O = GDP + phosphate + H(+). Regulated by guanine nucleotide exchange factors (GEFs) which promote the exchange of bound GDP for free GTP, GTPase activating proteins (GAPs) which increase the GTP hydrolysis activity, and GDP dissociation inhibitors (GDIs) which inhibit the dissociation of the nucleotide from the GTPase. The small GTPases Rab are key regulators of intracellular membrane trafficking, from the formation of transport vesicles to their fusion with membranes. Rabs cycle between active GTP-bound and inactive GDP-bound states. In their active state, drive transport of vesicular carriers from donor organelles to acceptor organelles to regulate the membrane traffic that maintains organelle identity and morphology. RAB2A regulates autophagy by promoting autophagosome-lysosome fusion via recruitment of the HOPS endosomal tethering complex; this process involves autophagosomal RAB2A and lysosomal RAB39A recruitment of HOPS subcomplexes VPS39-VPS11 and VPS41-VPS16-VPS18-VPS33A, respectively, which assemble into a functional complex to mediate membrane tethering and SNAREs-driven membrane fusion. Required for protein transport from the endoplasmic reticulum to the Golgi complex. Regulates the compacted morphology of the Golgi. Together with RAB2B, redundantly required for efficient autophagic flux. This is Ras-related protein Rab-2A (Rab2a) from Rattus norvegicus (Rat).